The sequence spans 961 residues: MTQKFEMADRFDASAVEQALYQHWEEQGYFKPSENPAVPSYCIAIPPPNVTGSLHMGHAFQQTLMDTLIRFNRMEGNNTLWQAGTDHAGIATQMVVERKIAAEEGKTRHDYGREAFINKIWDWKAYSGGTISQQMRRLGNSIDWQRERFTMDDGLSNAVKEVFVRLHEQGLIYRGKRLVNWDPKLHTAISDLEVENKESKGSLWHFRYPLSNGVKTADGKDYLIVATTRPETVLGDTAVAVHPEDERYQSLIGKTVLLPLANREIPIIADEYVDREFGTGVVKITPAHDFNDYEVGKRHALPMVNVMTMNADIRQTAEVLGPDGKPLNTYQAIIPADYQGLERFTARKKVVADFEALALLDEIKPHDLKVPYGDRGGVPIEPMLTDQWYVSVKPLAEVATKAVENGEIQFVPKQYENLYFSWMRDIQDWCISRQLWWGHRIPAWYDESGNVYVARTEAEVRIKHNLPLDLPLTQDEDVLDTWFSSGLWTFSTLGWPEQTKELKMFHTTDVLITGFDIIFFWVARMIMFTMHFIKDENGKPQVPFKTVYVTGLIRDEQGQKMSKSKGNVLDPIDMIDGISLADLLEKRTGNMMQPQLAEKIAKATRKEFAATPTLPAGGIAAHGTDALRFTLAALASNGRDINWDMKRLEGYRNFCNKLWNASRFVLTNDKLDLSAGEVEYSLADRWIESSFNRTVGEFREALTQYRFDLAANAIYEFTWNQFCDWYLELTKPVFANGSDAQKRATSKTLVSLLEKLLRLAHPIMPFITEEIWQKVKHFAGVEGDSIMLQPFPIVEQAKLDADAEQQINWLKELIIAVRNIRAEANIAPSKALDLLVRNVTQQQAVILSENQLLLTAMAKLTSISVLTAGEQAPLSVAKLVGQVEVLVPMAGFINKDTELARLSKEIDKLHNEVMRIESKLSNEAFVAKAPEAVISKERAKMAEYQSGIEKLQAQFKAIEAL.

The 'HIGH' region signature appears at 48-58 (PNVTGSLHMGH). The 'KMSKS' region motif lies at 560-564 (KMSKS). Residue Lys563 coordinates ATP. Residues 892–961 (FINKDTELAR…QAQFKAIEAL (70 aa)) are a coiled coil.

The protein belongs to the class-I aminoacyl-tRNA synthetase family. ValS type 1 subfamily. As to quaternary structure, monomer.

The protein localises to the cytoplasm. It catalyses the reaction tRNA(Val) + L-valine + ATP = L-valyl-tRNA(Val) + AMP + diphosphate. Its function is as follows. Catalyzes the attachment of valine to tRNA(Val). As ValRS can inadvertently accommodate and process structurally similar amino acids such as threonine, to avoid such errors, it has a 'posttransfer' editing activity that hydrolyzes mischarged Thr-tRNA(Val) in a tRNA-dependent manner. This Haemophilus ducreyi (strain 35000HP / ATCC 700724) protein is Valine--tRNA ligase.